The primary structure comprises 75 residues: ATP synthase subunit c (75 aa).

The next 2 helical transmembrane spans lie at 8 to 28 and 54 to 74; these read FIAI…VANI and AGMV…LMFV.

This sequence belongs to the ATPase C chain family. As to quaternary structure, F-type ATPases have 2 components, F(1) - the catalytic core - and F(0) - the membrane proton channel. F(1) has five subunits: alpha(3), beta(3), gamma(1), delta(1), epsilon(1). F(0) has three main subunits: a(1), b(2) and c(10-14). The alpha and beta chains form an alternating ring which encloses part of the gamma chain. F(1) is attached to F(0) by a central stalk formed by the gamma and epsilon chains, while a peripheral stalk is formed by the delta and b chains.

The protein localises to the cell membrane. Its function is as follows. F(1)F(0) ATP synthase produces ATP from ADP in the presence of a proton or sodium gradient. F-type ATPases consist of two structural domains, F(1) containing the extramembraneous catalytic core and F(0) containing the membrane proton channel, linked together by a central stalk and a peripheral stalk. During catalysis, ATP synthesis in the catalytic domain of F(1) is coupled via a rotary mechanism of the central stalk subunits to proton translocation. In terms of biological role, key component of the F(0) channel; it plays a direct role in translocation across the membrane. A homomeric c-ring of between 10-14 subunits forms the central stalk rotor element with the F(1) delta and epsilon subunits. This Wolbachia sp. subsp. Brugia malayi (strain TRS) protein is ATP synthase subunit c.